We begin with the raw amino-acid sequence, 416 residues long: 5-hydroxytryptamine receptor 1A-beta (416 aa).

The Extracellular portion of the chain corresponds to 1–35 (MEGTNNTTGWTHFDSTSNRTSKSFDEEVKLSYQVV). N-linked (GlcNAc...) asparagine glycosylation is found at N5, N6, and N18. The helical transmembrane segment at 36–56 (TSFLLGALILCSIFGNACVVA) threads the bilayer. Residues 57–70 (AIALERSLQNVANY) are Cytoplasmic-facing. The chain crosses the membrane as a helical span at residues 71 to 95 (LIGSLAVTDLMVSVLVLPMAALYQV). Residues 96–104 (LNRWTLGQI) lie on the Extracellular side of the membrane. A helical transmembrane segment spans residues 105 to 129 (PCDIFISLDMLCCTSSILHLCVIAL). C106 and C189 are disulfide-bonded. Serotonin contacts are provided by D113 and C117. Residues 130–132 (DRY) carry the DRY motif; important for ligand-induced conformation changes motif. Residues 130-149 (DRYWAITEPIDYMKKRTPRR) are Cytoplasmic-facing. The helical transmembrane segment at 150–171 (AAVLISVTWLVGFSISIPPMLI) threads the bilayer. Topologically, residues 172–195 (MRSQPSSMAEDRANSKQCKITQDP) are extracellular. Residues 196–218 (WYTIYSTFGAFYIPLTLMLVLYG) form a helical membrane-spanning segment. Residues 219–340 (RIFKAARFRI…LARERKTVKT (122 aa)) lie on the Cytoplasmic side of the membrane. 1D-myo-inositol 4-phosphate is bound by residues K339, T340, and G346. The chain crosses the membrane as a helical span at residues 341-364 (LGIIMGTFILCWLPFFIVALVMPF). Topologically, residues 365–372 (CQESCFMP) are extracellular. A helical transmembrane segment spans residues 373 to 397 (HWLKDVINWLGYSNSLLNPIIYAYF). An NPxxY motif; important for ligand-induced conformation changes and signaling motif is present at residues 390–394 (NPIIY). 1D-myo-inositol 4-phosphate-binding residues include F397, N398, and K399. The Cytoplasmic segment spans residues 398–416 (NKDFQSAFKKIIKCHFCRA).

It belongs to the G-protein coupled receptor 1 family. 5-hydroxytryptamine receptor subfamily.

The protein localises to the cell membrane. G-protein coupled receptor activity is regulated by lipids: phosphatidylinositol 4-phosphate increases HTR1A-mediated activity. Functionally, G-protein coupled receptor for 5-hydroxytryptamine (serotonin). Also functions as a receptor for various drugs and psychoactive substances. Ligand binding causes a conformation change that triggers signaling via guanine nucleotide-binding proteins (G proteins) and modulates the activity of downstream effectors, such as adenylate cyclase. HTR1A is coupled to G(i)/G(o) G alpha proteins and mediates inhibitory neurotransmission: signaling inhibits adenylate cyclase activity and activates a phosphatidylinositol-calcium second messenger system that regulates the release of Ca(2+) ions from intracellular stores. Beta-arrestin family members regulate signaling by mediating both receptor desensitization and resensitization processes. The protein is 5-hydroxytryptamine receptor 1A-beta (htr1a-B) of Takifugu rubripes (Japanese pufferfish).